Consider the following 394-residue polypeptide: Actin-related protein 2-A (394 aa).

ATP is bound by residues Gly160–Gly162, Arg214–Glu218, and Gly305–Tyr310.

Belongs to the actin family. ARP2 subfamily. Component of the Arp2/3 complex composed of actr2/arp2, actr3/arp3, arpc1 (arpc1a or arpc1b), arpc2, arpc3, arpc4 and arpc5.

The protein resides in the cytoplasm. It localises to the cytoskeleton. Its subcellular location is the cell projection. It is found in the nucleus. Its function is as follows. ATP-binding component of the Arp2/3 complex, a multiprotein complex that mediates actin polymerization upon stimulation by nucleation-promoting factor (NPF). The Arp2/3 complex mediates the formation of branched actin networks in the cytoplasm, providing the force for cell motility. Seems to contact the pointed end of the daughter actin filament. In addition to its role in the cytoplasmic cytoskeleton, the Arp2/3 complex also promotes actin polymerization in the nucleus, thereby regulating gene transcription and repair of damaged DNA. The Arp2/3 complex promotes homologous recombination (HR) repair in response to DNA damage by promoting nuclear actin polymerization, leading to drive motility of double-strand breaks (DSBs). The sequence is that of Actin-related protein 2-A (actr2-a) from Xenopus laevis (African clawed frog).